A 200-amino-acid chain; its full sequence is MGTPSYDIKNKGDDMQEEPKVKLHHEKGGDEKEKIIEKETPSQDINNKDTISSYVLRDDTQEIPKMEHEEGGYVKEKIVEKETISQYIIKIEGDDDAQEKLKVEYEEEEYEKEKIVEKETPSQDINNKGDDAQEKPKVEHEEGDDKETPSQDIIKMEGEGALEITKVVCEKIIVREDLAVQSKPPSKRDPPKMQTDNNKL.

Residues 1–33 (MGTPSYDIKNKGDDMQEEPKVKLHHEKGGDEKE) are disordered. 2 consecutive propeptides follow at residues 1–178 (MGTP…REDL) and 197–200 (NNKL). Residues 3-8 (TPSYDI) form a 1; truncated repeat. The segment covering 8–33 (IKNKGDDMQEEPKVKLHHEKGGDEKE) has biased composition (basic and acidic residues). A run of 4 repeats spans residues 37–45 (EKETPSQDI), 80–88 (EKETISQYI), 117–125 (EKETPSQDI), and 145–153 (DKETPSQDI). Disordered stretches follow at residues 106 to 159 (EEEE…MEGE) and 178 to 200 (LAVQ…NNKL). Basic and acidic residues-rich tracts occupy residues 111 to 140 (EKEK…KVEH) and 146 to 158 (KETP…KMEG).

In terms of tissue distribution, all organs except the roots. Transported out of wounds to distal tissues.

Its subcellular location is the cytoplasm. Functionally, activates a lipid-based signal transduction pathway in which linolenic acid is converted to jasmonic acid, a potent activator of defense gene transcription, including proteinase inhibitor. The polypeptide is Systemin (Solanum lycopersicum (Tomato)).